We begin with the raw amino-acid sequence, 469 residues long: NADH-quinone oxidoreductase subunit N (469 aa).

The next 14 membrane-spanning stretches (helical) occupy residues 6-26 (IWII…LLLG), 37-57 (VGVA…PAAL), 61-81 (LGVA…LTAA), 96-116 (ISGE…AVVS), 121-141 (LLIL…LVAI), 156-176 (LLLG…LYAA), 197-217 (PIAL…ISLV), 234-254 (VVAF…LLLL), 263-283 (LHTP…LAAL), 291-311 (MLAY…LTGS), 315-335 (FAAV…AFGA), 362-382 (AGIL…AGFI), 397-419 (IPLA…RVVV), and 441-461 (IALS…SPLL).

This sequence belongs to the complex I subunit 2 family. As to quaternary structure, NDH-1 is composed of 14 different subunits. Subunits NuoA, H, J, K, L, M, N constitute the membrane sector of the complex.

The protein resides in the cell inner membrane. The enzyme catalyses a quinone + NADH + 5 H(+)(in) = a quinol + NAD(+) + 4 H(+)(out). Its function is as follows. NDH-1 shuttles electrons from NADH, via FMN and iron-sulfur (Fe-S) centers, to quinones in the respiratory chain. The immediate electron acceptor for the enzyme in this species is believed to be ubiquinone. Couples the redox reaction to proton translocation (for every two electrons transferred, four hydrogen ions are translocated across the cytoplasmic membrane), and thus conserves the redox energy in a proton gradient. The chain is NADH-quinone oxidoreductase subunit N from Geotalea uraniireducens (strain Rf4) (Geobacter uraniireducens).